The chain runs to 725 residues: Kelch domain-containing protein SSO1033 (725 aa).

Positions 1 to 28 are cleaved as a signal peptide; the sequence is MKYGNMKKWAPLILFLFSLLLLQGISLH. 6 Kelch repeats span residues 59–100, 101–145, 146–199, 201–248, 250–297, and 299–342; these read SLYI…VYNN, TIYV…VYNN, AIYV…FNGT, LIIV…YYRG, LFIV…QVGN, and LYLA…VTLG. 4 Fibronectin type-III domains span residues 323 to 410, 411 to 504, 505 to 583, and 585 to 665; these read PPLP…TPAS, VPNP…TKAS, VFAF…VVYY, and PPAS…TGDY.

The chain is Kelch domain-containing protein SSO1033 from Saccharolobus solfataricus (strain ATCC 35092 / DSM 1617 / JCM 11322 / P2) (Sulfolobus solfataricus).